The following is a 256-amino-acid chain: DNA repair protein RecO (256 aa).

It belongs to the RecO family.

In terms of biological role, involved in DNA repair and RecF pathway recombination. This chain is DNA repair protein RecO, found in Clostridium novyi (strain NT).